The sequence spans 373 residues: Outer membrane protein assembly factor BamC (373 aa).

The first 16 residues, 1-16 (MLKQVTPLVLIAAVTA), serve as a signal peptide directing secretion. The N-palmitoyl cysteine moiety is linked to residue Cys-17. A lipid anchor (S-diacylglycerol cysteine) is attached at Cys-17.

It belongs to the BamC family. In terms of assembly, part of the Bam complex.

Its subcellular location is the cell outer membrane. Functionally, part of the outer membrane protein assembly complex, which is involved in assembly and insertion of beta-barrel proteins into the outer membrane. The polypeptide is Outer membrane protein assembly factor BamC (Shewanella sediminis (strain HAW-EB3)).